We begin with the raw amino-acid sequence, 223 residues long: Putative oxidoreductase MT1904 (223 aa).

4–28 (LVTGGDTDLGRTMAEGFRNDGHKVT) serves as a coordination point for NADP(+). Serine 128 serves as a coordination point for substrate.

This sequence belongs to the short-chain dehydrogenases/reductases (SDR) family.

In Mycobacterium tuberculosis (strain CDC 1551 / Oshkosh), this protein is Putative oxidoreductase MT1904.